The chain runs to 315 residues: Olfactory receptor 3A3 (315 aa).

The Extracellular segment spans residues 1-28 (MESEAGTNRTAVAEFMLLGLVQTEEMQS). A glycan (N-linked (GlcNAc...) asparagine) is linked at Asn-8. The chain crosses the membrane as a helical span at residues 29–52 (VIFVLLLFAYLVTTGGNLSILAAI). Residues 53–60 (LVEPKLHT) are Cytoplasmic-facing. A helical transmembrane segment spans residues 61–82 (PMYFFLGNLSVLDVGCITVTVP). The Extracellular portion of the chain corresponds to 83-103 (AMLGRLLSHKSTISYDACLSQ). Cys-100 and Cys-192 are disulfide-bonded. A helical membrane pass occupies residues 104 to 123 (LFFFHLLAGMDCFLLTAMAY). Residues 124–143 (DRFLAICRPLTYSTHMNQRV) are Cytoplasmic-facing. A helical membrane pass occupies residues 144 to 161 (QRMLVAVSWTCAFTNALT). Residues 162–199 (HTIALTTLNFCGPSVINHFYCDLPQLFQLSCSSTQLNE) are Extracellular-facing. A helical membrane pass occupies residues 200-222 (LLLFVAAAVMAVAPLVFISVSYA). Topologically, residues 223-239 (HVVAAVLQIHSAEGRKK) are cytoplasmic. A helical transmembrane segment spans residues 240-262 (AFSTCGSHLTVVGIFYGTGVFSY). At 263–275 (MRLGSVESSDKDK) the chain is on the extracellular side. The helical transmembrane segment at 276 to 295 (GVGVFMTVINPMLNPLIYSL) threads the bilayer. Residues 296-315 (RNTDVQGALCQLLVVKRSLT) are Cytoplasmic-facing.

This sequence belongs to the G-protein coupled receptor 1 family.

Its subcellular location is the cell membrane. Its function is as follows. Odorant receptor. The protein is Olfactory receptor 3A3 (OR3A3) of Pan troglodytes (Chimpanzee).